Consider the following 341-residue polypeptide: Nicotinate-nucleotide--dimethylbenzimidazole phosphoribosyltransferase (341 aa).

Glu310 acts as the Proton acceptor in catalysis.

The protein belongs to the CobT family.

It catalyses the reaction 5,6-dimethylbenzimidazole + nicotinate beta-D-ribonucleotide = alpha-ribazole 5'-phosphate + nicotinate + H(+). Its pathway is nucleoside biosynthesis; alpha-ribazole biosynthesis; alpha-ribazole from 5,6-dimethylbenzimidazole: step 1/2. Catalyzes the synthesis of alpha-ribazole-5'-phosphate from nicotinate mononucleotide (NAMN) and 5,6-dimethylbenzimidazole (DMB). The polypeptide is Nicotinate-nucleotide--dimethylbenzimidazole phosphoribosyltransferase (Vibrio cholerae serotype O1 (strain ATCC 39315 / El Tor Inaba N16961)).